The following is a 398-amino-acid chain: Putative transposase y4qJ (398 aa).

The protein belongs to the transposase 32 family.

This chain is Putative transposase y4qJ, found in Sinorhizobium fredii (strain NBRC 101917 / NGR234).